The primary structure comprises 439 residues: Transcriptional enhancer factor TEF-5 (439 aa).

The segment covering 1–12 has biased composition (polar residues); the sequence is MASNSWTANSSP. Residues 1–34 are disordered; the sequence is MASNSWTANSSPGEAREDGSEGLDKGLDNDAEGV. Residue Ala2 is modified to N-acetylalanine. The span at 14 to 28 shows a compositional bias: basic and acidic residues; it reads EAREDGSEGLDKGLD. The segment at residues 28 to 104 is a DNA-binding region (TEA); sequence DNDAEGVWSP…QVLARKKVRE (77 aa). Ser148 bears the Phosphoserine mark. The segment at 173-439 is transcriptional activation; the sequence is GPSQDIKPFA…QHHVYKLVKD (267 aa).

Interacts with YAP1 and WWTR1/TAZ. In terms of tissue distribution, expressed in embryos as well as in many adult tissues.

It is found in the nucleus. Its function is as follows. Transcription factor which plays a key role in the Hippo signaling pathway, a pathway involved in organ size control and tumor suppression by restricting proliferation and promoting apoptosis. The core of this pathway is composed of a kinase cascade wherein MST1/MST2, in complex with its regulatory protein SAV1, phosphorylates and activates LATS1/2 in complex with its regulatory protein MOB1, which in turn phosphorylates and inactivates YAP1 oncoprotein and WWTR1/TAZ. Acts by mediating gene expression of YAP1 and WWTR1/TAZ, thereby regulating cell proliferation, migration and epithelial mesenchymal transition (EMT) induction. The protein is Transcriptional enhancer factor TEF-5 (Tead3) of Mus musculus (Mouse).